A 78-amino-acid polypeptide reads, in one-letter code: D-alanyl carrier protein (78 aa).

A Carrier domain is found at 1 to 78 (MEFKEQVLDL…KIVEALEELR (78 aa)). O-(pantetheine 4'-phosphoryl)serine is present on S36.

This sequence belongs to the DltC family. In terms of processing, 4'-phosphopantetheine is transferred from CoA to a specific serine of apo-DCP.

The protein resides in the cytoplasm. It participates in cell wall biogenesis; lipoteichoic acid biosynthesis. Functionally, carrier protein involved in the D-alanylation of lipoteichoic acid (LTA). The loading of thioester-linked D-alanine onto DltC is catalyzed by D-alanine--D-alanyl carrier protein ligase DltA. The DltC-carried D-alanyl group is further transferred to cell membrane phosphatidylglycerol (PG) by forming an ester bond, probably catalyzed by DltD. D-alanylation of LTA plays an important role in modulating the properties of the cell wall in Gram-positive bacteria, influencing the net charge of the cell wall. The chain is D-alanyl carrier protein from Staphylococcus haemolyticus (strain JCSC1435).